We begin with the raw amino-acid sequence, 414 residues long: Isocitrate dehydrogenase [NADP] cytoplasmic (414 aa).

S2 is modified (N-acetylserine). Y42 carries the phosphotyrosine modification. T75–T77 contacts NADP(+). Residue T77 participates in substrate binding. K81 carries the post-translational modification N6-acetyllysine. R82 contacts NADP(+). Substrate-binding positions include S94 to R100 and R109. K126 bears the N6-succinyllysine mark. Residues R132 and K212 each contribute to the substrate site. K224, K233, and K243 each carry N6-acetyllysine. D252 is a Mn(2+) binding site. K260 contacts NADP(+). 2 residues coordinate Mn(2+): D275 and D279. Residue G310–H315 participates in NADP(+) binding. K321 carries the post-translational modification N6-acetyllysine. N328 contributes to the NADP(+) binding site. S389 carries the post-translational modification Phosphoserine. K400 is modified (N6-succinyllysine).

Belongs to the isocitrate and isopropylmalate dehydrogenases family. As to quaternary structure, homodimer. Mg(2+) serves as cofactor. The cofactor is Mn(2+). In terms of processing, acetylation at Lys-374 dramatically reduces catalytic activity. As to expression, highly expressed in the liver followed by kidney, lower expression in spleen, brain and lung.

The protein resides in the cytoplasm. Its subcellular location is the cytosol. It catalyses the reaction D-threo-isocitrate + NADP(+) = 2-oxoglutarate + CO2 + NADPH. Irreversibly inhibited by Cd(2+) concentrations above 50 uM. Functionally, catalyzes the NADP(+)-dependent oxidative decarboxylation of isocitrate (D-threo-isocitrate) to 2-ketoglutarate (2-oxoglutarate), which is required by other enzymes such as the phytanoyl-CoA dioxygenase. Plays a critical role in the generation of NADPH, an important cofactor in many biosynthesis pathways. May act as a corneal epithelial crystallin and may be involved in maintaining corneal epithelial transparency. This Mus musculus (Mouse) protein is Isocitrate dehydrogenase [NADP] cytoplasmic (Idh1).